The following is a 282-amino-acid chain: Pantothenate synthetase (282 aa).

30-37 (MGNLHDGH) provides a ligand contact to ATP. His37 acts as the Proton donor in catalysis. A (R)-pantoate-binding site is contributed by Gln61. Gln61 is a beta-alanine binding site. Position 149–152 (149–152 (GNKD)) interacts with ATP. (R)-pantoate is bound at residue Gln155. Residues Ala178 and 186 to 189 (MSSR) each bind ATP.

The protein belongs to the pantothenate synthetase family. In terms of assembly, homodimer.

It localises to the cytoplasm. The catalysed reaction is (R)-pantoate + beta-alanine + ATP = (R)-pantothenate + AMP + diphosphate + H(+). It functions in the pathway cofactor biosynthesis; (R)-pantothenate biosynthesis; (R)-pantothenate from (R)-pantoate and beta-alanine: step 1/1. Catalyzes the condensation of pantoate with beta-alanine in an ATP-dependent reaction via a pantoyl-adenylate intermediate. This is Pantothenate synthetase from Marinomonas sp. (strain MWYL1).